The chain runs to 177 residues: ATP-dependent protease subunit HslV (177 aa).

Threonine 6 is a catalytic residue. 3 residues coordinate Na(+): alanine 162, cysteine 165, and threonine 168.

This sequence belongs to the peptidase T1B family. HslV subfamily. In terms of assembly, a double ring-shaped homohexamer of HslV is capped on each side by a ring-shaped HslU homohexamer. The assembly of the HslU/HslV complex is dependent on binding of ATP.

The protein localises to the cytoplasm. The enzyme catalyses ATP-dependent cleavage of peptide bonds with broad specificity.. Allosterically activated by HslU binding. Its function is as follows. Protease subunit of a proteasome-like degradation complex believed to be a general protein degrading machinery. The polypeptide is ATP-dependent protease subunit HslV (Lawsonia intracellularis (strain PHE/MN1-00)).